We begin with the raw amino-acid sequence, 518 residues long: D-aminopeptidase (518 aa).

Catalysis depends on Ser-62, which acts as the Nucleophile. Catalysis depends on Lys-65, which acts as the Proton donor/acceptor. Residues 477-487 (QRSMDAPSPGE) form an important for specificity region. Asp-481 is a substrate binding site.

This sequence belongs to the peptidase S12 family. As to quaternary structure, homodimer.

It carries out the reaction Release of an N-terminal D-amino acid from a peptide, Xaa-|-Yaa-, in which Xaa is preferably D-Ala, D-Ser or D-Thr. D-amino acid amides and methyl esters also are hydrolyzed, as is glycine amide.. With respect to regulation, inhibited by beta-lactam compounds such as 6-aminopenicillic acid, 7-aminocephalosporanic acid, benzylpenicillin and ampicillin. Inhibited by p-chloromercuribenzoate. Its function is as follows. Hydrolyzes N-terminal residues in D-amino acid-containing peptides. The sequence is that of D-aminopeptidase from Brucella abortus (strain S19).